The chain runs to 688 residues: MVLETLKQGLDSSQIHEALIQLDSYPREPVDLDASMVLIKFVIPVYPSLPERSKVILRRLASKSFTFLCQIVTFSRTISGRDGLQEIRIYQEILEDIISFEPGCLTFYLKASTTSKADRDSIKALFFGSKLFNVLANRIDMAKYLGYLRLQWKFLLESNETDPPGFLGEWLVSSFLLNPVLAADMLLGELFLLKESYFFSFQKIISASSLIDQKRLIAKFLLPYIQVIVTLENLNDVRKILRRFDLDKIISLSVLFEIQSLPLKEVIVRLMSNHSSTKFVSALVSKFADFTDEEVDTKTCELLVLFAVHNLNHSQREEIAHDERFLNGVTKHLGSNEREARERAMFIAKLLSGGHLKYESDFKINIPNVKFESNSDDKIIDFQSLKNPSICNTQTDVGKDKITEVSGHVQSLTLDCSDSDDEDENDEREIVKRIVFLKDLMKEYEKTGESRKAPLIPLLKQTVKLIRQKADFQLEVGYYAQGILSSIVCLNNEFDEPLFEQWRINALTSILVVLPEKVNGAINILFNSELSLQQRMSLLSALGLSARELRGLDDPTIVKPKFDFPTNRLPWDDQSHHNSRLVEVQESTSMIKKTKTVWKSRKLGKDREKGTQNRFRKYAGLFFYPLAHGWLNGIDVGTYNQLFKSHYLTTLRIIYSCANPVHDFESMTELMNHIISSAIEEGISLNKG.

2 positions are modified to phosphoserine: Ser417 and Ser419.

The protein belongs to the TEL2 family. As to quaternary structure, component of the TTT complex composed of TEL2, TTI1 and TTI2. Interacts with TTI1 and TTI2.

It is found in the nucleus. It localises to the chromosome. The protein localises to the telomere. Functionally, part of the TTT complex that is required to stabilize protein levels of the phosphatidylinositol 3-kinase-related protein kinase (PIKK) family proteins. Required for telomere length regulation and telomere position effect. Regulates telomere length and participates in gene silencing at subtelomeric regions. Binds to telomeric DNA repeats. The protein is Telomere length regulation protein TEL2 (TEL2) of Saccharomyces cerevisiae (strain ATCC 204508 / S288c) (Baker's yeast).